Reading from the N-terminus, the 597-residue chain is Dynein intermediate chain 3, ciliary (597 aa).

WD repeat units follow at residues 159 to 210, 213 to 253, 260 to 301, 314 to 354, 361 to 400, 404 to 444, and 449 to 488; these read EIKR…KPEF, KPVS…QAVE, SHHD…EPTE, ENAQ…PPEK, EHIG…SSIM, YHMS…KDPT, and VSDD…CTMQ. Disordered stretches follow at residues 512-546 and 562-597; these read RQRE…VAAA and AAQQ…EKEG. Positions 528-542 are enriched in acidic residues; sequence QDDDEEGGPDEEEDL. Residues 584–597 show a composition bias toward basic and acidic residues; that stretch reads GSEKKDTENGEKEG.

It belongs to the dynein intermediate chain family. In terms of assembly, consists of at least two heavy chains (alpha and beta), three intermediate chains and several light chains.

The protein localises to the cytoplasm. The protein resides in the cytoskeleton. Its subcellular location is the cilium axoneme. Functionally, may play a role in the regulation of dynein heavy chain activity. The polypeptide is Dynein intermediate chain 3, ciliary (Heliocidaris crassispina (Sea urchin)).